Consider the following 693-residue polypeptide: Elongation factor G (693 aa).

The region spanning 8–282 (EHTRNIGIMA…AVIDFMPSPT (275 aa)) is the tr-type G domain. GTP-binding positions include 17 to 24 (AHIDAGKT), 81 to 85 (DTPGH), and 135 to 138 (NKMD).

This sequence belongs to the TRAFAC class translation factor GTPase superfamily. Classic translation factor GTPase family. EF-G/EF-2 subfamily.

It localises to the cytoplasm. Catalyzes the GTP-dependent ribosomal translocation step during translation elongation. During this step, the ribosome changes from the pre-translocational (PRE) to the post-translocational (POST) state as the newly formed A-site-bound peptidyl-tRNA and P-site-bound deacylated tRNA move to the P and E sites, respectively. Catalyzes the coordinated movement of the two tRNA molecules, the mRNA and conformational changes in the ribosome. The chain is Elongation factor G from Ruminiclostridium cellulolyticum (strain ATCC 35319 / DSM 5812 / JCM 6584 / H10) (Clostridium cellulolyticum).